The chain runs to 161 residues: Allophycocyanin alpha chain (161 aa).

N71 carries the N4-methylasparagine modification. Residue C81 participates in (2R,3E)-phycocyanobilin binding.

The protein belongs to the phycobiliprotein family. In terms of assembly, heterodimer of an alpha and a beta chain. In terms of processing, contains one covalently linked phycocyanobilin chromophore.

Its subcellular location is the cellular thylakoid membrane. In terms of biological role, light-harvesting photosynthetic bile pigment-protein from the phycobiliprotein complex. Allophycocyanin has a maximum absorption at approximately 650 nanometers. The sequence is that of Allophycocyanin alpha chain (apcA) from Thermosynechococcus vestitus (strain NIES-2133 / IAM M-273 / BP-1).